A 243-amino-acid polypeptide reads, in one-letter code: Small ribosomal subunit protein uS2c (243 aa).

The tract at residues 224-243 is disordered; the sequence is GNNGKVSSDQEDTQELQTVQ.

This sequence belongs to the universal ribosomal protein uS2 family.

It is found in the plastid. The protein resides in the chloroplast. The sequence is that of Small ribosomal subunit protein uS2c (rps2) from Rhodomonas salina (Cryptomonas salina).